Consider the following 364-residue polypeptide: UDP-N-acetylglucosamine--N-acetylmuramyl-(pentapeptide) pyrophosphoryl-undecaprenol N-acetylglucosamine transferase (364 aa).

UDP-N-acetyl-alpha-D-glucosamine contacts are provided by residues 10-12 (TGG), Asn124, Arg165, Ser193, Ile248, and Gln293.

This sequence belongs to the glycosyltransferase 28 family. MurG subfamily.

It is found in the cell inner membrane. It carries out the reaction di-trans,octa-cis-undecaprenyl diphospho-N-acetyl-alpha-D-muramoyl-L-alanyl-D-glutamyl-meso-2,6-diaminopimeloyl-D-alanyl-D-alanine + UDP-N-acetyl-alpha-D-glucosamine = di-trans,octa-cis-undecaprenyl diphospho-[N-acetyl-alpha-D-glucosaminyl-(1-&gt;4)]-N-acetyl-alpha-D-muramoyl-L-alanyl-D-glutamyl-meso-2,6-diaminopimeloyl-D-alanyl-D-alanine + UDP + H(+). It functions in the pathway cell wall biogenesis; peptidoglycan biosynthesis. In terms of biological role, cell wall formation. Catalyzes the transfer of a GlcNAc subunit on undecaprenyl-pyrophosphoryl-MurNAc-pentapeptide (lipid intermediate I) to form undecaprenyl-pyrophosphoryl-MurNAc-(pentapeptide)GlcNAc (lipid intermediate II). This Geobacter metallireducens (strain ATCC 53774 / DSM 7210 / GS-15) protein is UDP-N-acetylglucosamine--N-acetylmuramyl-(pentapeptide) pyrophosphoryl-undecaprenol N-acetylglucosamine transferase.